The sequence spans 361 residues: Putative agmatine deiminase (361 aa).

Cys-354 acts as the Amidino-cysteine intermediate in catalysis.

The protein belongs to the agmatine deiminase family.

The enzyme catalyses agmatine + H2O = N-carbamoylputrescine + NH4(+). The chain is Putative agmatine deiminase from Streptococcus pneumoniae (strain ATCC 700669 / Spain 23F-1).